The sequence spans 543 residues: Chaperonin GroEL (543 aa).

Residues 29–32, 86–90, glycine 413, 478–480, and aspartate 494 contribute to the ATP site; these read TIGP, DGTTT, and NAA.

It belongs to the chaperonin (HSP60) family. As to quaternary structure, forms a cylinder of 14 subunits composed of two heptameric rings stacked back-to-back. Interacts with the co-chaperonin GroES.

Its subcellular location is the cytoplasm. The catalysed reaction is ATP + H2O + a folded polypeptide = ADP + phosphate + an unfolded polypeptide.. Functionally, together with its co-chaperonin GroES, plays an essential role in assisting protein folding. The GroEL-GroES system forms a nano-cage that allows encapsulation of the non-native substrate proteins and provides a physical environment optimized to promote and accelerate protein folding. The protein is Chaperonin GroEL of Limosilactobacillus fermentum (strain NBRC 3956 / LMG 18251) (Lactobacillus fermentum).